The chain runs to 396 residues: Elongation factor Tu 2 (396 aa).

One can recognise a tr-type G domain in the interval 10 to 206 (KPHCNIGTIG…AVDAYIPQPE (197 aa)). The tract at residues 19–26 (GHVDHGKT) is G1. Residue 19-26 (GHVDHGKT) coordinates GTP. Residue Thr26 coordinates Mg(2+). The tract at residues 60–64 (GITIS) is G2. The segment at 81–84 (DCPG) is G3. GTP-binding positions include 81–85 (DCPGH) and 136–139 (NKCD). Residues 136-139 (NKCD) are G4. Residues 174 to 176 (SAL) are G5.

The protein belongs to the TRAFAC class translation factor GTPase superfamily. Classic translation factor GTPase family. EF-Tu/EF-1A subfamily. Monomer.

It localises to the cytoplasm. The catalysed reaction is GTP + H2O = GDP + phosphate + H(+). In terms of biological role, GTP hydrolase that promotes the GTP-dependent binding of aminoacyl-tRNA to the A-site of ribosomes during protein biosynthesis. This chain is Elongation factor Tu 2, found in Rhodopseudomonas palustris (strain BisB5).